We begin with the raw amino-acid sequence, 200 residues long: Recombination protein RecR (200 aa).

The C4-type zinc-finger motif lies at 57-72 (CSECRTFTEEDTCAIC). The Toprim domain maps to 81–176 (GEMCIVESPA…PASRIAHGVP (96 aa)).

This sequence belongs to the RecR family.

May play a role in DNA repair. It seems to be involved in an RecBC-independent recombinational process of DNA repair. It may act with RecF and RecO. This Aliivibrio fischeri (strain ATCC 700601 / ES114) (Vibrio fischeri) protein is Recombination protein RecR.